Here is a 67-residue protein sequence, read N- to C-terminus: ATP synthase F(0) complex subunit 8 (67 aa).

A helical transmembrane segment spans residues 8-24 (TWFTTILSTSFSIIHRL). Position 54 is an N6-acetyllysine; alternate (Lys54). At Lys54 the chain carries N6-succinyllysine; alternate. At Lys57 the chain carries N6-acetyllysine.

It belongs to the ATPase protein 8 family. As to quaternary structure, component of the ATP synthase complex composed at least of ATP5F1A/subunit alpha, ATP5F1B/subunit beta, ATP5MC1/subunit c (homooctomer), MT-ATP6/subunit a, MT-ATP8/subunit 8, ATP5ME/subunit e, ATP5MF/subunit f, ATP5MG/subunit g, ATP5MK/subunit k, ATP5MJ/subunit j, ATP5F1C/subunit gamma, ATP5F1D/subunit delta, ATP5F1E/subunit epsilon, ATP5PF/subunit F6, ATP5PB/subunit b, ATP5PD/subunit d, ATP5PO/subunit OSCP. ATP synthase complex consists of a soluble F(1) head domain (subunits alpha(3) and beta(3)) - the catalytic core - and a membrane F(0) domain - the membrane proton channel (subunits c, a, 8, e, f, g, k and j). These two domains are linked by a central stalk (subunits gamma, delta, and epsilon) rotating inside the F1 region and a stationary peripheral stalk (subunits F6, b, d, and OSCP). Interacts with PRICKLE3.

It localises to the mitochondrion membrane. In terms of biological role, subunit 8, of the mitochondrial membrane ATP synthase complex (F(1)F(0) ATP synthase or Complex V) that produces ATP from ADP in the presence of a proton gradient across the membrane which is generated by electron transport complexes of the respiratory chain. ATP synthase complex consist of a soluble F(1) head domain - the catalytic core - and a membrane F(1) domain - the membrane proton channel. These two domains are linked by a central stalk rotating inside the F(1) region and a stationary peripheral stalk. During catalysis, ATP synthesis in the catalytic domain of F(1) is coupled via a rotary mechanism of the central stalk subunits to proton translocation. In vivo, can only synthesize ATP although its ATP hydrolase activity can be activated artificially in vitro. Part of the complex F(0) domain. This Glis glis (Fat dormouse) protein is ATP synthase F(0) complex subunit 8.